Reading from the N-terminus, the 427-residue chain is O-methyltransferase FrzF (427 aa).

D281 contacts S-adenosyl-L-methionine. H327 acts as the Proton acceptor in catalysis.

The protein belongs to the class I-like SAM-binding methyltransferase superfamily. Cation-independent O-methyltransferase family. Homodimer.

The catalysed reaction is (1S,4S)-4-[(4-hydroxyphenyl)methyl]-2,5-diazaspiro[bicyclo[3.2.1]octane-6,1'-cyclohexan]-4'-one + S-adenosyl-L-methionine = (1S,4S)-4-[(4-methoxyphenyl)methyl]-2,5-diazaspiro[bicyclo[3.2.1]octane-6,1'-cyclohexan]-4'-one + S-adenosyl-L-homocysteine + H(+). It carries out the reaction (1S,4S)-4-[(4-hydroxyphenyl)methyl]-2-methyl-2,5-diazaspiro[bicyclo[3.2.1]octane-6,1'-cyclohexan]-4'-one + S-adenosyl-L-methionine = (1S,4S)-4-[(4-methoxyphenyl)methyl]-2-methyl-2,5-diazaspiro[bicyclo[3.2.1]octane-6,1'-cyclohexan]-4'-one + S-adenosyl-L-homocysteine + H(+). It participates in secondary metabolite biosynthesis. O-methyltransferase; part of the gene cluster that mediates the biosynthesis of the alkaloid (-)-FR901483, a potent immunosuppressant that shows efficacy in animal models and a probable inhibitor of purine nucleotide biosynthesis by targeting phosphoribosylpyrophosphate amidotransferase (PPAT). Within the pathway, FrzF methylates the phenolic oxygen at position C4. The biosynthesis of (-)-FR901483 starts with the condensation of two L-tyrosines to yield (S,S)-dityrosyl-piperazine. This process occurs in 3 steps with the non-canonical nonribosomal peptide synthetase FrzA catalyzing the reduction of L-tyrosine into L-tyrosinal, the spontaneous condensation of 2 L-tyrosinal units, and the subsequent reduction by the NmrA-like family domain-containing oxidoreductase FrzB. The cytochrome P450 monooxygenase FrzC then performs coupling between N10 and C1' to morph the piperazine into a 1,4-diazabicyclo[3.2.1]octane spiro-fused to a 2,5-cyclohexadienone. The dienone portion is further reduced to cyclohexanone by the flavin-dependent reductase FrzD. The methyltranserases (MTs) FrzE and FrzF are then involved in the methylation at the C10' amine and the C4 phenolic oxygen, respectively. The order of the two MTs appear to be interchangeable. Cleavage of the C9-N10' bond by the dioxygenase FrzG then leads to formation of a conjugated iminium. In addition to the oxidation of C9, an additional dehydrogenation between C7 and C8 can occur to give a likely shunt product. The next biosynthetic step is the intramolecular aldol condensation catalyzed by the newly identified aldolase FrzH to yield an aza-tricyclic product with the formation of a C9-C3' bond. The short-chain dehydrogenase/reductase FrzI then produces dephospho-(-)-FR901483 that is phosphorylated at C4'-OH into (-)-FR901483 by the phosphotransferase FrzJ. The chain is O-methyltransferase FrzF from Cladobotryum sp.